The chain runs to 83 residues: uncharacterized protein (83 aa).

The tract at residues 57-83 (ESVEEEEEFEDYDEFEEEEEYYYDDEY) is disordered.

This is an uncharacterized protein from Archaeoglobus fulgidus (strain ATCC 49558 / DSM 4304 / JCM 9628 / NBRC 100126 / VC-16).